Reading from the N-terminus, the 417-residue chain is Caveolae-associated protein 2 (417 aa).

The interval 1-42 is disordered; sequence MGEDAAQAEKFQHPNTDMLQEKPSNPSPMPSSTPSPSLNLGS. An N-acetylglycine modification is found at Gly2. Residues 2–168 form an interaction with CAVIN1 region; it reads GEDAAQAEKF…IFQEESEIPA (167 aa). Phosphoserine occurs at positions 27, 35, 37, and 51. Coiled coils occupy residues 61 to 87 and 126 to 267; these read LLDK…INLE and RAVR…VERR. The segment at 62 to 100 is leucine-zipper; that stretch reads LDKLVNMLDAVRENQHNMEQRQINLEGSVKGIQNDLTKL. Residue Thr195 is modified to Phosphothreonine. 2 disordered regions span residues 198 to 242 and 256 to 381; these read NVDL…DSLK and KLGT…ALQQ. Residues Ser202, Ser203, and Ser217 each carry the phosphoserine modification. Over residues 202–218 the composition is skewed to acidic residues; sequence SSDDELPGDEEALEDSA. The span at 219 to 242 shows a compositional bias: basic and acidic residues; the sequence is EEKMEESRAEKIKRSSLKKVDSLK. A compositionally biased stretch (polar residues) spans 274–286; the sequence is LTPNHQKASSGKS. Phosphoserine is present on residues Ser282, Ser283, Ser286, Ser287, Ser292, and Ser295. Residues 302–320 are compositionally biased toward basic and acidic residues; the sequence is REGESSAENETKLEEQVQD. A phosphoserine mark is found at Ser326, Ser335, Ser358, and Ser362. The span at 354–365 shows a compositional bias: polar residues; the sequence is RGNNSGVGSNAD. Phosphothreonine is present on Thr367. The segment covering 367–376 has biased composition (acidic residues); that stretch reads TIEEDEEEES. The residue at position 387 (Tyr387) is a Phosphotyrosine. Phosphoserine occurs at positions 389 and 395.

This sequence belongs to the CAVIN family. Component of the CAVIN complex composed of CAVIN1, CAVIN2, CAVIN3 and CAVIN. Interacts with CAVIN4; this augments the transactivation of NPPA by CAVIN4. Binds to PRKCA in the presence of phosphatidylserine. Interacts with CAVIN1 and CAV3. The N-terminus is blocked. In terms of processing, phosphorylated on Ser residues.

Its subcellular location is the cytoplasm. It is found in the cytosol. The protein resides in the membrane. It localises to the caveola. Functionally, plays an important role in caveolar biogenesis and morphology. Regulates caveolae morphology by inducing membrane curvature within caveolae. Plays a role in caveola formation in a tissue-specific manner. Required for the formation of caveolae in the lung and fat endothelia but not in the heart endothelia. Negatively regulates the size or stability of CAVIN complexes in the lung endothelial cells. May play a role in targeting PRKCA to caveolae. This chain is Caveolae-associated protein 2, found in Rattus norvegicus (Rat).